Consider the following 109-residue polypeptide: Nucleoid-associated protein A1S_1684 (109 aa).

This sequence belongs to the YbaB/EbfC family. Homodimer.

Its subcellular location is the cytoplasm. The protein resides in the nucleoid. Its function is as follows. Binds to DNA and alters its conformation. May be involved in regulation of gene expression, nucleoid organization and DNA protection. This chain is Nucleoid-associated protein A1S_1684, found in Acinetobacter baumannii (strain ATCC 17978 / DSM 105126 / CIP 53.77 / LMG 1025 / NCDC KC755 / 5377).